The following is a 556-amino-acid chain: Glutamine--tRNA ligase (556 aa).

The 'HIGH' region motif lies at Pro-34–His-44. Residues Glu-35–Asn-37 and His-41–Ser-47 each bind ATP. Residues Asp-67 and Tyr-212 each contribute to the L-glutamine site. ATP-binding positions include Thr-231, Arg-261–Leu-262, and Met-269–Lys-271. The 'KMSKS' region motif lies at Ile-268–Arg-272.

The protein belongs to the class-I aminoacyl-tRNA synthetase family. In terms of assembly, monomer.

It is found in the cytoplasm. It carries out the reaction tRNA(Gln) + L-glutamine + ATP = L-glutaminyl-tRNA(Gln) + AMP + diphosphate. The protein is Glutamine--tRNA ligase of Sodalis glossinidius (strain morsitans).